A 287-amino-acid polypeptide reads, in one-letter code: Flagellin (287 aa).

Belongs to the bacterial flagellin family.

The protein localises to the secreted. Its subcellular location is the bacterial flagellum. In terms of biological role, flagellin is the subunit protein which polymerizes to form the filaments of bacterial flagella. The protein is Flagellin (flaA) of Listeria innocua serovar 6a (strain ATCC BAA-680 / CLIP 11262).